We begin with the raw amino-acid sequence, 64 residues long: Large ribosomal subunit protein uL29 (64 aa).

This sequence belongs to the universal ribosomal protein uL29 family.

The protein is Large ribosomal subunit protein uL29 of Polynucleobacter necessarius subsp. necessarius (strain STIR1).